We begin with the raw amino-acid sequence, 120 residues long: Nitrogenase-stabilizing/protective protein NifW (120 aa).

This sequence belongs to the NifW family. In terms of assembly, homotrimer; associates with NifD.

Functionally, may protect the nitrogenase Fe-Mo protein from oxidative damage. The protein is Nitrogenase-stabilizing/protective protein NifW of Rhodospirillum rubrum (strain ATCC 11170 / ATH 1.1.1 / DSM 467 / LMG 4362 / NCIMB 8255 / S1).